A 203-amino-acid polypeptide reads, in one-letter code: ATP-dependent Clp protease proteolytic subunit 2 (203 aa).

Residue Ser98 is the Nucleophile of the active site. His123 is a catalytic residue.

This sequence belongs to the peptidase S14 family. As to quaternary structure, fourteen ClpP subunits assemble into 2 heptameric rings which stack back to back to give a disk-like structure with a central cavity, resembling the structure of eukaryotic proteasomes.

It is found in the cytoplasm. The enzyme catalyses Hydrolysis of proteins to small peptides in the presence of ATP and magnesium. alpha-casein is the usual test substrate. In the absence of ATP, only oligopeptides shorter than five residues are hydrolyzed (such as succinyl-Leu-Tyr-|-NHMec, and Leu-Tyr-Leu-|-Tyr-Trp, in which cleavage of the -Tyr-|-Leu- and -Tyr-|-Trp bonds also occurs).. In terms of biological role, cleaves peptides in various proteins in a process that requires ATP hydrolysis. Has a chymotrypsin-like activity. Plays a major role in the degradation of misfolded proteins. In Chlamydia pneumoniae (Chlamydophila pneumoniae), this protein is ATP-dependent Clp protease proteolytic subunit 2.